The following is a 319-amino-acid chain: 4-diphosphocytidyl-2-C-methyl-D-erythritol kinase (319 aa).

The active site involves K21. ATP is bound at residue 106-116 (PIGAGLAGGSS). D148 is an active-site residue.

It belongs to the GHMP kinase family. IspE subfamily.

The catalysed reaction is 4-CDP-2-C-methyl-D-erythritol + ATP = 4-CDP-2-C-methyl-D-erythritol 2-phosphate + ADP + H(+). Its pathway is isoprenoid biosynthesis; isopentenyl diphosphate biosynthesis via DXP pathway; isopentenyl diphosphate from 1-deoxy-D-xylulose 5-phosphate: step 3/6. Its function is as follows. Catalyzes the phosphorylation of the position 2 hydroxy group of 4-diphosphocytidyl-2C-methyl-D-erythritol. The polypeptide is 4-diphosphocytidyl-2-C-methyl-D-erythritol kinase (Prochlorococcus marinus (strain SARG / CCMP1375 / SS120)).